The following is a 166-amino-acid chain: Phosphopantetheine adenylyltransferase (166 aa).

A substrate-binding site is contributed by serine 11. Residues 11-12 (SF) and histidine 19 each bind ATP. Residues lysine 43, valine 80, and arginine 94 each coordinate substrate. ATP is bound by residues 95 to 97 (GLR), glutamate 105, and 130 to 136 (VRTVTAT).

The protein belongs to the bacterial CoaD family. As to quaternary structure, homohexamer. The cofactor is Mg(2+).

It localises to the cytoplasm. The catalysed reaction is (R)-4'-phosphopantetheine + ATP + H(+) = 3'-dephospho-CoA + diphosphate. Its pathway is cofactor biosynthesis; coenzyme A biosynthesis; CoA from (R)-pantothenate: step 4/5. Functionally, reversibly transfers an adenylyl group from ATP to 4'-phosphopantetheine, yielding dephospho-CoA (dPCoA) and pyrophosphate. The sequence is that of Phosphopantetheine adenylyltransferase from Chelativorans sp. (strain BNC1).